The chain runs to 1705 residues: Alpha-protein kinase 3 (1705 aa).

The span at 1–10 shows a compositional bias: low complexity; the sequence is MGSRRAPSRG. A disordered region spans residues 1–33; the sequence is MGSRRAPSRGWGAGGRSGAGGDGEDDGPVWIPS. A compositionally biased stretch (gly residues) spans 11-21; the sequence is WGAGGRSGAGG. One can recognise an Ig-like 1 domain in the interval 77-168; that stretch reads PLFETTLKSR…GIVSCSGVLE (92 aa). Residues 211–221 show a composition bias toward basic and acidic residues; it reads DTLRKLSPDRF. Disordered stretches follow at residues 211–244, 308–749, 792–845, 1082–1145, and 1173–1226; these read DTLRKLSPDRFQRKRRLSGAQAPGPSVPTREPEG, LKEE…GPRA, GPLS…ERPG, GLAS…KFPG, and RAAG…MLEV. Ser228 is modified (phosphoserine). The span at 308–342 shows a compositional bias: basic and acidic residues; it reads LKEESGAKKKKKDEESKQGLRKPELEKAAQSRRSS. Residues 370–382 show a composition bias toward low complexity; sequence PRGRAARGPGSSG. The segment covering 495 to 504 has biased composition (polar residues); it reads DSKPISSLSQ. Positions 557-579 are enriched in low complexity; it reads TTTAPTMSASSSSDVASIGVSTS. Positions 598-609 are enriched in polar residues; the sequence is TSANQRTGSKKN. Positions 647 to 657 are enriched in basic and acidic residues; sequence ESKRPQSDRSA. Residues 666–676 show a composition bias toward polar residues; the sequence is RAETQLETTQA. Basic and acidic residues predominate over residues 679–700; the sequence is KIQEDRKAQADKGTQEDRRMQG. Positions 708–729 are enriched in polar residues; that stretch reads KGTQSEGSAPTAMEGQSEQEVA. Pro residues predominate over residues 736–745; sequence SRTPKLPPTA. The segment covering 829–844 has biased composition (basic and acidic residues); that stretch reads AKQEDSPFQCPKEERP. The segment covering 1120 to 1131 has biased composition (low complexity); it reads GQAAPGQGPSAE. The residue at position 1222 (Ser1222) is a Phosphoserine. The 89-residue stretch at 1274–1362 folds into the Ig-like 2 domain; sequence PQVIRKIRVE…GSASTDFCLS (89 aa). A disulfide bridge links Cys1296 with Cys1346. An Alpha-type protein kinase domain is found at 1390 to 1625; sequence KGLADSGCWG…YCELLGLTPL (236 aa). The interval 1628-1705 is disordered; sequence PEAAHPQAKA…EEGSKAQGMR (78 aa). Residues 1664-1696 are compositionally biased toward polar residues; that stretch reads PQGTRKSAPSSKATPQASEPVTTQLLGQPPTQE.

This sequence belongs to the protein kinase superfamily. Alpha-type protein kinase family. ALPK subfamily.

The protein localises to the nucleus. The enzyme catalyses L-seryl-[protein] + ATP = O-phospho-L-seryl-[protein] + ADP + H(+). The catalysed reaction is L-threonyl-[protein] + ATP = O-phospho-L-threonyl-[protein] + ADP + H(+). Functionally, involved in cardiomyocyte differentiation. This is Alpha-protein kinase 3 from Homo sapiens (Human).